A 306-amino-acid chain; its full sequence is Curved DNA-binding protein (306 aa).

The region spanning 5–69 is the J domain; that stretch reads DYYAIMGVKP…QRRAEYDQMW (65 aa).

The protein resides in the cytoplasm. Its subcellular location is the nucleoid. DNA-binding protein that preferentially recognizes a curved DNA sequence. It is probably a functional analog of DnaJ; displays overlapping activities with DnaJ, but functions under different conditions, probably acting as a molecular chaperone in an adaptive response to environmental stresses other than heat shock. Lacks autonomous chaperone activity; binds native substrates and targets them for recognition by DnaK. Its activity is inhibited by the binding of CbpM. The sequence is that of Curved DNA-binding protein from Shigella boydii serotype 18 (strain CDC 3083-94 / BS512).